Consider the following 193-residue polypeptide: CASP-like protein 1E1 (193 aa).

Residues 1 to 30 lie on the Cytoplasmic side of the membrane; sequence MESQNKASLPVMDGLERRVVASQSEGASTC. Residues 31–51 traverse the membrane as a helical segment; it reads DLLLRVLALVLTLAAAIVLGV. Over 52-86 the chain is Extracellular; it reads DKQTKVVPIKIVDTLPAINLPVSAKWHYLSAFTYS. The helical transmembrane segment at 87 to 107 threads the bilayer; it reads VASNAIACSYAALSLVLAVSG. Over 108–113 the chain is Cytoplasmic; that stretch reads KKGIMS. Residues 114–134 form a helical membrane-spanning segment; the sequence is IVIVLDLLMVAMLFSSNGAAL. The Extracellular segment spans residues 135-162; sequence AIGLMGYQGNSHVRWTKVCHVFGRFCNQ. A helical transmembrane segment spans residues 163–183; it reads VAVSISLSLLGSILFLLLVGI. Residues 184-193 are Cytoplasmic-facing; it reads TSLRLHKKSK.

Belongs to the Casparian strip membrane proteins (CASP) family. Homodimer and heterodimers.

Its subcellular location is the cell membrane. The sequence is that of CASP-like protein 1E1 from Populus trichocarpa (Western balsam poplar).